We begin with the raw amino-acid sequence, 588 residues long: Adenine deaminase (588 aa).

It belongs to the metallo-dependent hydrolases superfamily. Adenine deaminase family. As to quaternary structure, homodimer. Mn(2+) is required as a cofactor.

The catalysed reaction is adenine + H2O + H(+) = hypoxanthine + NH4(+). This chain is Adenine deaminase, found in Escherichia coli O7:K1 (strain IAI39 / ExPEC).